Here is a 575-residue protein sequence, read N- to C-terminus: MNYFPDEVIEHVFDFVTSHKDRNAISLVCKSWYKIERYSRQKVFIGNCYAINPERLLRRFPCLKSLTLKGKPHFADFNLVPHEWGGFVLPWIEALARSRVGLEELRLKRMVVTDESLELLSRSFVNFKSLVLVSCEGFTTDGLASIAANCRHLRDLDLQENEIDDHRGQWLSCFPDTCTTLVTLNFACLEGETNLVALERLVARSPNLKSLKLNRAVPLDALARLMACAPQIVDLGVGSYENDPDSESYLKLMAVIKKCTSLRSLSGFLEAAPHCLSAFHPICHNLTSLNLSYAAEIHGSHLIKLIQHCKKLQRLWILDSIGDKGLEVVASTCKELQELRVFPSDLLGGGNTAVTEEGLVAISAGCPKLHSILYFCQQMTNAALVTVAKNCPNFIRFRLCILEPNKPDHVTSQPLDEGFGAIVKACKSLRRLSLSGLLTDQVFLYIGMYANQLEMLSIAFAGDTDKGMLYVLNGCKKMKKLEIRDSPFGDTALLADVSKYETMRSLWMSSCEVTLSGCKRLAEKAPWLNVEIINENDNNRMEENGHEGRQKVDKLYLYRTVVGTRMDAPPFVWIL.

The F-box domain occupies 1–47; it reads MNYFPDEVIEHVFDFVTSHKDRNAISLVCKSWYKIERYSRQKVFIGN. A 1D-myo-inositol hexakisphosphate-binding site is contributed by lysine 69. The interaction with auxin-responsive proteins stretch occupies residues 76-77; it reads DF. Residues 108-109 and arginine 340 contribute to the 1D-myo-inositol hexakisphosphate site; that span reads KR. The segment at 343–348 is interaction with auxin-responsive proteins; sequence PSDLLG. 1D-myo-inositol hexakisphosphate is bound at residue 396 to 398; it reads RFR. Residues 400–404 form an interaction with auxin-responsive proteins region; the sequence is CILEP. Arginine 431 contacts 1D-myo-inositol hexakisphosphate. An interaction with auxin-responsive proteins region spans residues 459–460; the sequence is AF. 1D-myo-inositol hexakisphosphate contacts are provided by residues 479–480 and arginine 504; that span reads KK.

As to quaternary structure, part of a SCF (SKP1-cullin-F-box) protein ligase complex. Interacts with Aux/IAA proteins (IAA7) in an auxin-dependent manner. As to expression, ubiquitous, with higher levels in seedlings.

The protein localises to the nucleus. The protein operates within protein modification; protein ubiquitination. Its function is as follows. Component of SCF(ASK-cullin-F-box) E3 ubiquitin ligase complexes, which may mediate the ubiquitination and subsequent proteasomal degradation of target proteins. Confers sensitivity to the virulent bacterial pathogen P.syringae. Auxin receptor that mediates Aux/IAA proteins proteasomal degradation and auxin-regulated transcription. Involved in embryogenesis regulation by auxin. This chain is Protein AUXIN SIGNALING F-BOX 2 (AFB2), found in Arabidopsis thaliana (Mouse-ear cress).